The following is a 123-amino-acid chain: Small ribosomal subunit protein uS13 (123 aa).

The disordered stretch occupies residues 93 to 123 (HRKGLPVRGQNTKNNARTRKGPAKAIAGKKK). Residues 108 to 123 (ARTRKGPAKAIAGKKK) are compositionally biased toward basic residues.

The protein belongs to the universal ribosomal protein uS13 family. As to quaternary structure, part of the 30S ribosomal subunit. Forms a loose heterodimer with protein S19. Forms two bridges to the 50S subunit in the 70S ribosome.

Functionally, located at the top of the head of the 30S subunit, it contacts several helices of the 16S rRNA. In the 70S ribosome it contacts the 23S rRNA (bridge B1a) and protein L5 of the 50S subunit (bridge B1b), connecting the 2 subunits; these bridges are implicated in subunit movement. Contacts the tRNAs in the A and P-sites. The sequence is that of Small ribosomal subunit protein uS13 from Leuconostoc citreum (strain KM20).